The chain runs to 195 residues: Granulocyte colony-stimulating factor (195 aa).

The signal sequence occupies residues M1–A21. 2 disulfide bridges follow: C57–C63 and C85–C95. A glycan (O-linked (GalNAc...) threonine) is linked at T154.

Belongs to the IL-6 superfamily. As to quaternary structure, monomer. Post-translationally, O-glycosylated.

The protein resides in the secreted. Its function is as follows. Granulocyte/macrophage colony-stimulating factors are cytokines that act in hematopoiesis by controlling the production, differentiation, and function of 2 related white cell populations of the blood, the granulocytes and the monocytes-macrophages. This CSF induces granulocytes. In Bos taurus (Bovine), this protein is Granulocyte colony-stimulating factor (CSF3).